A 607-amino-acid chain; its full sequence is Glutamyl-tRNA(Gln) amidotransferase subunit E (607 aa).

Residues 399 to 428 (GVPEETRGANPDGTTRFLRPRPGAARMYPE) form a disordered region.

The protein belongs to the GatB/GatE family. GatE subfamily. As to quaternary structure, heterodimer of GatD and GatE.

The enzyme catalyses L-glutamyl-tRNA(Gln) + L-glutamine + ATP + H2O = L-glutaminyl-tRNA(Gln) + L-glutamate + ADP + phosphate + H(+). Its function is as follows. Allows the formation of correctly charged Gln-tRNA(Gln) through the transamidation of misacylated Glu-tRNA(Gln) in organisms which lack glutaminyl-tRNA synthetase. The reaction takes place in the presence of glutamine and ATP through an activated gamma-phospho-Glu-tRNA(Gln). The GatDE system is specific for glutamate and does not act on aspartate. The polypeptide is Glutamyl-tRNA(Gln) amidotransferase subunit E (Pyrobaculum neutrophilum (strain DSM 2338 / JCM 9278 / NBRC 100436 / V24Sta) (Thermoproteus neutrophilus)).